The following is a 347-amino-acid chain: GMP reductase (347 aa).

108–131 (NDFLKLQRILALSPALRFICVDVA) serves as a coordination point for NADP(+). Residues G181 and G183 each coordinate K(+). The active-site Thioimidate intermediate is C186. 216–239 (IVGDGGCTCPGDVAKAFGGGADFV) contributes to the NADP(+) binding site.

This sequence belongs to the IMPDH/GMPR family. GuaC type 1 subfamily. In terms of assembly, homotetramer.

The enzyme catalyses IMP + NH4(+) + NADP(+) = GMP + NADPH + 2 H(+). Functionally, catalyzes the irreversible NADPH-dependent deamination of GMP to IMP. It functions in the conversion of nucleobase, nucleoside and nucleotide derivatives of G to A nucleotides, and in maintaining the intracellular balance of A and G nucleotides. The sequence is that of GMP reductase from Tolumonas auensis (strain DSM 9187 / NBRC 110442 / TA 4).